The chain runs to 136 residues: MIPGEIITKSTEVEINNHHPETVIEVENTGDRPIQVGSHFHFYEANAALDFEREMAYGKHLDIPAGAAVRFEPGDKKEVQLVEYAGKRKIFGFRGMVNGPIDESRVYRPTDENDEYAGVFGDNGTENVNKKGGKRS.

The segment at 112–136 (ENDEYAGVFGDNGTENVNKKGGKRS) is disordered.

This sequence belongs to the urease beta subunit family. In terms of assembly, heterotrimer of UreA (gamma), UreB (beta) and UreC (alpha) subunits. Three heterotrimers associate to form the active enzyme.

It is found in the cytoplasm. It carries out the reaction urea + 2 H2O + H(+) = hydrogencarbonate + 2 NH4(+). It functions in the pathway nitrogen metabolism; urea degradation; CO(2) and NH(3) from urea (urease route): step 1/1. This Staphylococcus aureus (strain MRSA252) protein is Urease subunit beta.